Reading from the N-terminus, the 217-residue chain is MVRGQYKKGNDERMRFPKKNKPQKFENYAWVLDYLPYGYPDKPDEPIVQGLGEYQFLLMEMIPKPNVDIELGERVYIGKGKRDKIDHVRRMIKYEQLTPTAKSELLYVVMEAVKIQEDRFVRFFNECPPITTRLHTLELLPEIKKKYMWKIIEEREAKKFESFKDFEERIGKNPVRIIAKRIEKELSDDKKDKYYLFVKWKKGIILNEDNMTFYLKE.

This is an uncharacterized protein from Methanocaldococcus jannaschii (strain ATCC 43067 / DSM 2661 / JAL-1 / JCM 10045 / NBRC 100440) (Methanococcus jannaschii).